Reading from the N-terminus, the 292-residue chain is Putative FNIP repeat-containing protein L281 (292 aa).

The stretch at 95 to 134 (FNKSIDDIPSTITHLSLGAAFNGEVSNIPTSVTHLKLGVS) is one FNIP repeat.

This is Putative FNIP repeat-containing protein L281 from Acanthamoeba polyphaga mimivirus (APMV).